The primary structure comprises 154 residues: Myoglobin (154 aa).

Residues 2–148 (GLSDGEWQLV…FRKDMASNYK (147 aa)) enclose the Globin domain. A Phosphoserine modification is found at Ser-4. Position 65 (His-65) interacts with nitrite. His-65 provides a ligand contact to O2. Thr-68 carries the post-translational modification Phosphothreonine. Position 94 (His-94) interacts with heme b.

The protein belongs to the globin family. In terms of assembly, monomeric.

Its subcellular location is the cytoplasm. The protein resides in the sarcoplasm. It carries out the reaction Fe(III)-heme b-[protein] + nitric oxide + H2O = Fe(II)-heme b-[protein] + nitrite + 2 H(+). The catalysed reaction is H2O2 + AH2 = A + 2 H2O. In terms of biological role, monomeric heme protein which primary function is to store oxygen and facilitate its diffusion within muscle tissues. Reversibly binds oxygen through a pentacoordinated heme iron and enables its timely and efficient release as needed during periods of heightened demand. Depending on the oxidative conditions of tissues and cells, and in addition to its ability to bind oxygen, it also has a nitrite reductase activity whereby it regulates the production of bioactive nitric oxide. Under stress conditions, like hypoxia and anoxia, it also protects cells against reactive oxygen species thanks to its pseudoperoxidase activity. The sequence is that of Myoglobin (MB) from Hylobates agilis (Agile gibbon).